Consider the following 151-residue polypeptide: Ubiquitin-conjugating enzyme E2 2 (151 aa).

The disordered stretch occupies residues 1–26 (MSTTARRRLMRDFKRMQQDPPQGVSA). The UBC core domain occupies 4 to 150 (TARRRLMRDF…VRDTVEASWT (147 aa)). The active-site Glycyl thioester intermediate is cysteine 88.

The protein belongs to the ubiquitin-conjugating enzyme family.

The protein localises to the cytoplasm. It localises to the nucleus. The catalysed reaction is S-ubiquitinyl-[E1 ubiquitin-activating enzyme]-L-cysteine + [E2 ubiquitin-conjugating enzyme]-L-cysteine = [E1 ubiquitin-activating enzyme]-L-cysteine + S-ubiquitinyl-[E2 ubiquitin-conjugating enzyme]-L-cysteine.. The protein operates within protein modification; protein ubiquitination. In terms of biological role, catalyzes the covalent attachment of ubiquitin to other proteins. Plays a role in transcription regulation by catalyzing the monoubiquitination of histone H2B to form H2BK123ub1. H2BK123ub1 gives a specific tag for epigenetic transcriptional activation and is also a prerequisite for H3K4me and H3K79me formation. Also involved in postreplication repair of UV-damaged DNA, in N-end rule-dependent protein degradation and in sporulation. This chain is Ubiquitin-conjugating enzyme E2 2 (UBC2), found in Yarrowia lipolytica (strain CLIB 122 / E 150) (Yeast).